A 335-amino-acid polypeptide reads, in one-letter code: GTPase Obg (335 aa).

Residues 4–162 (GNFVDYTKIY…ADIVLELKVL (159 aa)) form the Obg domain. The region spanning 163–332 (ADVGLVGFPN…LKDKLWAMLN (170 aa)) is the OBG-type G domain. Residues 169 to 176 (GFPNAGKS), 194 to 198 (FTTLK), 216 to 219 (DIPG), 283 to 286 (SKCD), and 313 to 315 (SSI) contribute to the GTP site. Mg(2+)-binding residues include Ser-176 and Thr-196.

This sequence belongs to the TRAFAC class OBG-HflX-like GTPase superfamily. OBG GTPase family. In terms of assembly, monomer. Requires Mg(2+) as cofactor.

The protein localises to the cytoplasm. In terms of biological role, an essential GTPase which binds GTP, GDP and possibly (p)ppGpp with moderate affinity, with high nucleotide exchange rates and a fairly low GTP hydrolysis rate. Plays a role in control of the cell cycle, stress response, ribosome biogenesis and in those bacteria that undergo differentiation, in morphogenesis control. This chain is GTPase Obg, found in Flavobacterium psychrophilum (strain ATCC 49511 / DSM 21280 / CIP 103535 / JIP02/86).